Consider the following 262-residue polypeptide: Granzyme A (262 aa).

The first 26 residues, 1–26 (MRNSYRFLASSLSVVVSLLLIPEDVC), serve as a signal peptide directing secretion. Residues 27–28 (EK) constitute a propeptide, activation peptide. One can recognise a Peptidase S1 domain in the interval 29-259 (IIGGNEVTPH…HLNWIIMTIK (231 aa)). C54 and C70 are disulfide-bonded. Active-site charge relay system residues include H69 and D114. 3 disulfide bridges follow: C148–C218, C179–C197, and C208–C234. N170 carries an N-linked (GlcNAc...) asparagine glycan. The Charge relay system role is filled by S212.

The protein belongs to the peptidase S1 family. Granzyme subfamily. In terms of assembly, homodimer; disulfide-linked. Interacts with APEX1.

Its subcellular location is the secreted. It is found in the cytoplasmic granule. The catalysed reaction is Hydrolysis of proteins, including fibronectin, type IV collagen and nucleolin. Preferential cleavage: -Arg-|-Xaa-, -Lys-|-Xaa- &gt;&gt; -Phe-|-Xaa- in small molecule substrates.. Its function is as follows. Abundant protease in the cytosolic granules of cytotoxic T-cells and NK-cells which activates caspase-independent pyroptosis when delivered into the target cell through the immunological synapse. It cleaves after Lys or Arg. Once delivered into the target cell, acts by catalyzing cleavage of gasdermin-B (GSDMB), releasing the pore-forming moiety of GSDMB, thereby triggering pyroptosis and target cell death. Cleaves APEX1 after 'Lys-31' and destroys its oxidative repair activity. Cleaves the nucleosome assembly protein SET after 'Lys-189', which disrupts its nucleosome assembly activity and allows the SET complex to translocate into the nucleus to nick and degrade the DNA. The sequence is that of Granzyme A from Homo sapiens (Human).